The primary structure comprises 142 residues: AP-2 complex subunit sigma (142 aa).

The protein belongs to the adaptor complexes small subunit family. In terms of assembly, adaptor protein complex 2 (AP-2) is a heterotetramer composed of two large adaptins (alpha-type and beta-type subunits), a medium adaptin (mu-type subunit) and a small adaptin (sigma-type subunit).

The protein resides in the cell membrane. Its subcellular location is the membrane. It is found in the coated pit. Functionally, subunit of the adaptor protein complex 2 (AP-2). Adaptor protein complexes function in protein transport via transport vesicles in different membrane traffic pathways. Adaptor protein complexes are vesicle coat components and appear to be involved in cargo selection and vesicle formation. AP-2 is involved in clathrin-dependent endocytosis in which cargo proteins are incorporated into vesicles surrounded by clathrin (clathrin-coated vesicles, CCVs) which are destined for fusion with the early endosome. The complex binds polyphosphoinositides. The sequence is that of AP-2 complex subunit sigma (AP17) from Arabidopsis thaliana (Mouse-ear cress).